The chain runs to 124 residues: Fluoride-specific ion channel FluC (124 aa).

Transmembrane regions (helical) follow at residues 5–25 (ILAVSIAGIAGTLLRFATGTW), 38–58 (TLAVNIVGCLIIGVLYGLFLL), 69–89 (GLIVGFVGGLTTFSSFSLDTL), and 99–119 (LALGYAGISVFGGLLATWAGL). Na(+) contacts are provided by glycine 76 and threonine 79.

This sequence belongs to the fluoride channel Fluc/FEX (TC 1.A.43) family.

The protein resides in the cell inner membrane. It carries out the reaction fluoride(in) = fluoride(out). Na(+) is not transported, but it plays an essential structural role and its presence is essential for fluoride channel function. In terms of biological role, fluoride-specific ion channel. Important for reducing fluoride concentration in the cell, thus reducing its toxicity. The sequence is that of Fluoride-specific ion channel FluC from Pseudomonas syringae pv. syringae (strain B728a).